The following is a 217-amino-acid chain: Cytidylate kinase (217 aa).

ATP is bound at residue 9-17; that stretch reads GPAASGKSS.

Belongs to the cytidylate kinase family. Type 1 subfamily.

It localises to the cytoplasm. The catalysed reaction is CMP + ATP = CDP + ADP. The enzyme catalyses dCMP + ATP = dCDP + ADP. The sequence is that of Cytidylate kinase from Bdellovibrio bacteriovorus (strain ATCC 15356 / DSM 50701 / NCIMB 9529 / HD100).